The following is a 204-amino-acid chain: Urease accessory protein UreG 1 (204 aa).

Gly-14–Thr-21 lines the GTP pocket.

This sequence belongs to the SIMIBI class G3E GTPase family. UreG subfamily. In terms of assembly, homodimer. UreD, UreF and UreG form a complex that acts as a GTP-hydrolysis-dependent molecular chaperone, activating the urease apoprotein by helping to assemble the nickel containing metallocenter of UreC. The UreE protein probably delivers the nickel.

The protein localises to the cytoplasm. In terms of biological role, facilitates the functional incorporation of the urease nickel metallocenter. This process requires GTP hydrolysis, probably effectuated by UreG. This chain is Urease accessory protein UreG 1, found in Methylorubrum extorquens (strain PA1) (Methylobacterium extorquens).